Reading from the N-terminus, the 795-residue chain is Levansucrase (795 aa).

The signal sequence occupies residues 1 to 36 (METKVRKKMYKKGKFWVVATITTAMLTGIGLSSVQA). Composition is skewed to polar residues over residues 42–66 (TQVS…SAAE) and 112–130 (QAAT…GQTN). Disordered regions lie at residues 42 to 83 (TQVS…NPAA) and 103 to 138 (ESKA…ATKE). Trp-245, Asp-246, and Ser-315 together coordinate sucrose. Asp-246 functions as the Nucleophile in the catalytic mechanism. Position 394 (Asp-394) interacts with Ca(2+). Arg-399 and Asp-400 together coordinate sucrose. Residues Gln-425, Asn-464, and Asp-496 each contribute to the Ca(2+) site. Residue Glu-497 coordinates sucrose. The active-site Proton donor/acceptor is the Glu-499. Arg-517 contributes to the sucrose binding site. A helical membrane pass occupies residues 774 to 794 (GNSFFAALLALFSAFCVSIGF).

It belongs to the glycosyl hydrolase 68 family.

It localises to the cell membrane. Its subcellular location is the cell surface. The enzyme catalyses [6)-beta-D-fructofuranosyl-(2-&gt;](n) alpha-D-glucopyranoside + sucrose = [6)-beta-D-fructofuranosyl-(2-&gt;](n+1) alpha-D-glucopyranoside + D-glucose. With respect to regulation, ca(2+) may play an important structural role and promote stability of levansucrase. Its function is as follows. Catalyzes the synthesis of levan, a fructose polymer, by transferring the fructosyl moiety from sucrose to a growing acceptor molecule. Also displays sucrose hydrolase activity. This Streptococcus mutans serotype c (strain ATCC 700610 / UA159) protein is Levansucrase.